The chain runs to 137 residues: Large ribosomal subunit protein uL16 (137 aa).

It belongs to the universal ribosomal protein uL16 family. In terms of assembly, part of the 50S ribosomal subunit.

Functionally, binds 23S rRNA and is also seen to make contacts with the A and possibly P site tRNAs. This chain is Large ribosomal subunit protein uL16, found in Leptospira biflexa serovar Patoc (strain Patoc 1 / Ames).